Consider the following 518-residue polypeptide: Probable triacylglyceride transporter BCG_1471c (518 aa).

14 helical membrane passes run Val-7–Val-27, Arg-46–Gly-66, Leu-76–Gly-96, Ile-110–Trp-130, Ala-144–Leu-164, Val-170–Pro-190, Val-201–Tyr-221, Val-230–Phe-250, Pro-270–Val-290, Ala-308–Ile-328, Val-337–Val-357, Leu-379–Val-401, Ile-408–Leu-428, and Ile-475–Gly-495.

The protein belongs to the major facilitator superfamily.

It localises to the cell inner membrane. With respect to regulation, inhibited by CCCP and valinomycin. Functionally, in association with lipoprotein LprG probably transports triacylglycerides (TAG) across the inner cell membrane into the periplasm; TAG probably regulates lipid metabolism and growth regulation. Confers resistance to several drugs such as rifampicin, clofazimine and novobiocin; is also part of the oxidative stress response and is needed to maintain normal growth characteristics. Probably an efflux transporter, involved in maintaining correct cell wall permeability. Probably required with LprG for normal surface localization of lipoarabinomannan (LAM). Required for optimal growth on cholesterol. This is Probable triacylglyceride transporter BCG_1471c from Mycobacterium bovis (strain BCG / Pasteur 1173P2).